We begin with the raw amino-acid sequence, 308 residues long: uncharacterized protein (308 aa).

Positions 11–87 (KRLDSLLASL…LKLEVLFEDK (77 aa)) constitute an S4 RNA-binding domain. Asp131 is a catalytic residue.

It belongs to the pseudouridine synthase RluA family.

It catalyses the reaction a uridine in RNA = a pseudouridine in RNA. This is an uncharacterized protein from Mycoplasma genitalium (strain ATCC 33530 / DSM 19775 / NCTC 10195 / G37) (Mycoplasmoides genitalium).